We begin with the raw amino-acid sequence, 576 residues long: K(+)/H(+) antiporter NhaP2 (576 aa).

13 helical membrane-spanning segments follow: residues 6-26, 34-54, 58-78, 87-107, 109-129, 163-183, 185-205, 219-239, 242-262, 271-291, 299-319, 335-355, and 359-379; these read INSF…LSPM, ILLI…GGIL, YSTA…DGGM, VALW…TSIT, MMAA…GAIV, PMAV…DTEM, FSFM…LGLG, LADG…YAAS, LGGS…NKPT, VLDG…GLLL, ILIP…PVAV, WFIS…VFPM, and LPGA…SLLV. In terms of domain architecture, RCK C-terminal spans 405–486; the sequence is SGVEIYPSSE…LEALSNLFSQ (82 aa).

The protein belongs to the monovalent cation:proton antiporter 1 (CPA1) transporter (TC 2.A.36) family. NhaP2 subfamily.

The protein localises to the cell inner membrane. It catalyses the reaction K(+)(in) + H(+)(out) = K(+)(out) + H(+)(in). In terms of biological role, k(+)/H(+) antiporter that extrudes potassium in exchange for external protons and maintains the internal concentration of potassium under toxic levels. The protein is K(+)/H(+) antiporter NhaP2 of Shewanella baltica (strain OS223).